The primary structure comprises 163 residues: Cyclic pyranopterin monophosphate synthase (163 aa).

Residues 79–81 (LCH) and 117–118 (ME) contribute to the substrate site. Asp132 is a catalytic residue.

It belongs to the MoaC family. In terms of assembly, homohexamer; trimer of dimers.

The enzyme catalyses (8S)-3',8-cyclo-7,8-dihydroguanosine 5'-triphosphate = cyclic pyranopterin phosphate + diphosphate. It functions in the pathway cofactor biosynthesis; molybdopterin biosynthesis. Its function is as follows. Catalyzes the conversion of (8S)-3',8-cyclo-7,8-dihydroguanosine 5'-triphosphate to cyclic pyranopterin monophosphate (cPMP). The sequence is that of Cyclic pyranopterin monophosphate synthase from Chloroflexus aurantiacus (strain ATCC 29366 / DSM 635 / J-10-fl).